We begin with the raw amino-acid sequence, 317 residues long: Melanocyte-stimulating hormone receptor (317 aa).

Residues 1–37 (MPVQGSQRRLLGSLNSTPTATPHLGLAANQTGARCLE) lie on the Extracellular side of the membrane. A glycan (N-linked (GlcNAc...) asparagine) is linked at Asn-29. A helical membrane pass occupies residues 38–63 (VSVPDGLFLSLGLVSLVENVLVVTAI). At 64-72 (AKNRNLHSP) the chain is on the cytoplasmic side. Residues 73-93 (MYCFICCLALSDLLVSGSNML) traverse the membrane as a helical segment. Residues 94–118 (ETAVTLLLEAGVLAARAAVVQQLDN) lie on the Extracellular side of the membrane. A helical membrane pass occupies residues 119–140 (VIDVITCSSMLSSLCFLGAIAV). Residues 141-163 (DRYISIFYALRYHSIVTLPRARR) lie on the Cytoplasmic side of the membrane. The chain crosses the membrane as a helical span at residues 164-183 (AVAAIWVASVLFSTLFIAYY). Residues 184 to 191 (DHAAVLLC) lie on the Extracellular side of the membrane. Residues 192 to 211 (LVIFFLAMLVLMAVLYVHML) traverse the membrane as a helical segment. Over 212–240 (ARACQHAQGIARLHKRQRLAHQGFGLKGA) the chain is Cytoplasmic. The chain crosses the membrane as a helical span at residues 241 to 266 (ATLTILLGIFFLCWGPFFLHLTLIVL). Residues 267 to 279 (CPQHPTCSCIFKN) are Extracellular-facing. Residues 280–300 (FNLFLALIICNAIIDPLIYAF) form a helical membrane-spanning segment. Over 301 to 317 (RSQELRRTLKEVLLCSW) the chain is Cytoplasmic. The S-palmitoyl cysteine moiety is linked to residue Cys-315.

This sequence belongs to the G-protein coupled receptor 1 family. As to quaternary structure, interacts with MGRN1, but does not undergo MGRN1-mediated ubiquitination; this interaction competes with GNAS-binding and thus inhibits agonist-induced cAMP production. Interacts with OPN3; the interaction results in a decrease in MC1R-mediated cAMP signaling and ultimately a decrease in melanin production in melanocytes.

The protein resides in the cell membrane. Functionally, receptor for MSH (alpha, beta and gamma) and ACTH. The activity of this receptor is mediated by G proteins which activate adenylate cyclase. Mediates melanogenesis, the production of eumelanin (black/brown) and phaeomelanin (red/yellow), via regulation of cAMP signaling in melanocytes. This is Melanocyte-stimulating hormone receptor (MC1R) from Papio anubis (Olive baboon).